Consider the following 792-residue polypeptide: Replication factor A (792 aa).

4 consecutive DNA-binding regions (OB) follow at residues 81–140, 192–273, 301–365, and 422–494; these read VTGR…IRIK, VNVI…TSLT, VTVM…ANVE, and VDVV…VELS. The C4-type zinc-finger motif lies at 678 to 696; the sequence is CPSCNERLDLSDENICNFC.

Probably binds DNA polymerase PolB. Binds helicase Hel308, in presence and absence of DNA.

In terms of biological role, inhibits DNA polymerase activity of PolB, which can be overcome by RFC and PNCA. Stimulates 3'-to 5'-exonuclease activity of PolB at 30 degrees Celsius, but has no effect at 50 or 70 degrees Celsius. Bind ssDNA and replication forks; replication forks structures bind both Hel308 and this protein. Has no effect on helicase activity of Hel308; may help target the helicase to DNA substrates that require DNA re-modeling. This Methanothermobacter thermautotrophicus (strain ATCC 29096 / DSM 1053 / JCM 10044 / NBRC 100330 / Delta H) (Methanobacterium thermoautotrophicum) protein is Replication factor A (rpa).